The following is a 238-amino-acid chain: MSCINLPNVLPGSPSKTRGQIQVILGPMFSGKSTELMRRVRRFQVAQYKCLVIKYAKDTRYSSLFSTHDRNTMEALPACLLRDVIQDAQRVAVIGIDEGQFFPDIVEFCENMANSGKTVIVAALDGTFQRKAFGTILNLVPLAESVVKLTAVCMECFREAAYTKRLGVEKEVEVIGGADKYHSVCRLCYFKKASGQPAVLDSEENKENCPMTLGKPAEAPGVRKLFATHQIWQCSQAN.

The residue at position 2 (Ser2) is an N-acetylserine. 2 positions are modified to phosphoserine: Ser2 and Ser13. ATP is bound by residues 26–33 (GPMFSGKS), 58–60 (DTR), and 97–100 (DEGQ). Glu98 acts as the Proton acceptor in catalysis. Phe128 contributes to the substrate binding site. Zn(2+) is bound by residues Cys153 and Cys156. Substrate is bound by residues 172-176 (VEVIG) and Tyr181. Zn(2+) contacts are provided by Cys185 and Cys188. The short motif at 206–208 (KEN) is the KEN box element. At Ser235 the chain carries Phosphoserine.

The protein belongs to the thymidine kinase family. In terms of assembly, homotetramer. Tetramerization from dimerization is induced by ATP and increases catalytic efficiency due to a high affinity for thymidine. Tetramerization is inhibited by phosphorylation at Ser-13. Interacts (via the KEN box) with FZR1. Phosphorylated on Ser-13 in mitosis. Phosphorylation of Ser-13 by CDK1 during mitosis reduces homotetramerization and catalytic efficiency when DNA replication is complete and intracellular TK1 is still present at a high level. In terms of processing, polyubiquitinated. Postmitosis, ubiquitination leads to proteasomal degradation. The KEN box sequence located at the C-terminal region targets for degradation by the anaphase promoting complex (APC/C) activated and rate-limited by FZR1.

The protein resides in the cytoplasm. The catalysed reaction is thymidine + ATP = dTMP + ADP + H(+). Its function is as follows. Cell-cycle-regulated enzyme of importance in nucleotide metabolism. Catalyzes the first enzymatic step in the salvage pathway converting thymidine into thymidine monophosphate. Transcriptional regulation limits expression to the S phase of the cell cycle and transient expression coincides with the oscillation in the intracellular dTTP concentration. In Bos taurus (Bovine), this protein is Thymidine kinase, cytosolic (TK1).